Reading from the N-terminus, the 158-residue chain is Cyclic pyranopterin monophosphate synthase (158 aa).

Substrate-binding positions include 74-76 and 112-113; these read MCH and ME. Asp-127 is an active-site residue.

This sequence belongs to the MoaC family. Homohexamer; trimer of dimers.

The catalysed reaction is (8S)-3',8-cyclo-7,8-dihydroguanosine 5'-triphosphate = cyclic pyranopterin phosphate + diphosphate. It participates in cofactor biosynthesis; molybdopterin biosynthesis. In terms of biological role, catalyzes the conversion of (8S)-3',8-cyclo-7,8-dihydroguanosine 5'-triphosphate to cyclic pyranopterin monophosphate (cPMP). This is Cyclic pyranopterin monophosphate synthase from Helicobacter pylori (strain Shi470).